Consider the following 156-residue polypeptide: Ribonuclease H (156 aa).

The 142-residue stretch at 3 to 144 (ELKQIRIYTD…CDTLAREAAE (142 aa)) folds into the RNase H type-1 domain. 4 residues coordinate Mg(2+): D12, E50, D72, and D136.

This sequence belongs to the RNase H family. As to quaternary structure, monomer. Mg(2+) serves as cofactor.

The protein localises to the cytoplasm. It catalyses the reaction Endonucleolytic cleavage to 5'-phosphomonoester.. In terms of biological role, endonuclease that specifically degrades the RNA of RNA-DNA hybrids. The chain is Ribonuclease H from Shewanella amazonensis (strain ATCC BAA-1098 / SB2B).